The following is a 122-amino-acid chain: uncharacterized protein (122 aa).

Phosphothreonine is present on T55. S72, S86, S96, S112, and S118 each carry phosphoserine.

It is found in the cytoplasm. This is an uncharacterized protein from Homo sapiens (Human).